A 297-amino-acid polypeptide reads, in one-letter code: 4-hydroxy-tetrahydrodipicolinate synthase (297 aa).

T45 is a pyruvate binding site. The active-site Proton donor/acceptor is the Y133. The active-site Schiff-base intermediate with substrate is K161. Residue I205 participates in pyruvate binding.

It belongs to the DapA family. Homotetramer; dimer of dimers.

Its subcellular location is the cytoplasm. The enzyme catalyses L-aspartate 4-semialdehyde + pyruvate = (2S,4S)-4-hydroxy-2,3,4,5-tetrahydrodipicolinate + H2O + H(+). Its pathway is amino-acid biosynthesis; L-lysine biosynthesis via DAP pathway; (S)-tetrahydrodipicolinate from L-aspartate: step 3/4. In terms of biological role, catalyzes the condensation of (S)-aspartate-beta-semialdehyde [(S)-ASA] and pyruvate to 4-hydroxy-tetrahydrodipicolinate (HTPA). This Dichelobacter nodosus (strain VCS1703A) protein is 4-hydroxy-tetrahydrodipicolinate synthase.